Here is a 459-residue protein sequence, read N- to C-terminus: tRNA modification GTPase MnmE (459 aa).

(6S)-5-formyl-5,6,7,8-tetrahydrofolate is bound by residues Arg23, Glu88, and Arg127. One can recognise a TrmE-type G domain in the interval 223–381 (GLSVVIVGKP…IKNCIKELFF (159 aa)). Asn233 serves as a coordination point for K(+). GTP is bound by residues 233–238 (NVGKSS), 252–258 (TDIPGTT), and 277–280 (DTAG). Ser237 serves as a coordination point for Mg(2+). Residues Thr252, Ile254, and Thr257 each contribute to the K(+) site. Thr258 serves as a coordination point for Mg(2+). Lys459 lines the (6S)-5-formyl-5,6,7,8-tetrahydrofolate pocket.

The protein belongs to the TRAFAC class TrmE-Era-EngA-EngB-Septin-like GTPase superfamily. TrmE GTPase family. In terms of assembly, homodimer. Heterotetramer of two MnmE and two MnmG subunits. Requires K(+) as cofactor.

The protein localises to the cytoplasm. In terms of biological role, exhibits a very high intrinsic GTPase hydrolysis rate. Involved in the addition of a carboxymethylaminomethyl (cmnm) group at the wobble position (U34) of certain tRNAs, forming tRNA-cmnm(5)s(2)U34. The chain is tRNA modification GTPase MnmE from Clostridium kluyveri (strain ATCC 8527 / DSM 555 / NBRC 12016 / NCIMB 10680 / K1).